A 796-amino-acid polypeptide reads, in one-letter code: Histone-lysine N-methyltransferase PRDM9 (796 aa).

The tract at residues 1–23 is disordered; sequence MSRTMNTNKPEENSTEGDAGKLE. The region spanning 27–90 is the KRAB-related domain; that stretch reads KVKDEFKDIS…QRQAIKPQIN (64 aa). The segment at 149 to 172 is disordered; that stretch reads SEHAQKPVCSPEEGNTSGQHFGKK. Positions 209, 212, 220, and 223 each coordinate Zn(2+). Residues 248 to 362 enclose the SET domain; that stretch reads PGLRIGPSGI…PGRELLVWYG (115 aa). Residues 260–262, Tyr-295, and 324–325 each bind S-adenosyl-L-methionine; these read AGL and NC. Residue 292–298 coordinates substrate; that stretch reads NSGYSWL. Tyr-361 is a substrate binding site. The residue at position 372 (Lys-372) is an N6,N6,N6-trimethyllysine; alternate. Position 372 is an N6-methyllysine; alternate (Lys-372). N6-methyllysine is present on residues Lys-376 and Lys-378. The segment at 392–415 adopts a C2H2-type 1 zinc-finger fold; the sequence is HPCFLCSLAFSSQKFLTQHVEWNH. Positions 394, 397, 410, and 415 each coordinate Zn(2+). The segment covering 443–457 has biased composition (basic and acidic residues); it reads FDSQNKNDKASNEVK. The interval 443–497 is disordered; it reads FDSQNKNDKASNEVKRKSKPRHKWTRQRISTAFSSTLKEQMRSEESKRTVEEELR. Residues 458–468 show a composition bias toward basic residues; the sequence is RKSKPRHKWTR. The span at 469–480 shows a compositional bias: polar residues; sequence QRISTAFSSTLK. The segment covering 481–497 has biased composition (basic and acidic residues); that stretch reads EQMRSEESKRTVEEELR. The C2H2-type 2; degenerate zinc-finger motif lies at 522-540; that stretch reads QCGQCFSDKSNVSEHQRTH. 9 C2H2-type zinc fingers span residues 546–568, 574–596, 602–624, 630–652, 658–680, 686–708, 714–736, 742–764, and 770–792; these read YICR…QRTH and YICR…LRTH. Cys-716, Cys-719, His-732, His-736, Cys-744, Cys-747, His-760, His-764, Cys-772, Cys-775, His-788, and His-792 together coordinate Zn(2+).

Belongs to the class V-like SAM-binding methyltransferase superfamily. Homodimer. Interacts with EHMT2 and CDYL; interaction only takes place when PRDM9 is bound to hotspot DNA. Interacts with CXXC1; this interaction does not link PRDM9-activated recombination hotspot sites with DSB machinery and is not required for the hotspot recognition pathway. Forms a complex with EWSR1, REC8, SYCP3 and SYCP1; complex formation is dependent of phosphorylated form of REC8 and requires PRDM9 bound to hotspot DNA; EWSR1 joins PRDM9 with the chromosomal axis through REC8. Post-translationally, mono-methylated; automethylated. Tri-methylated; automethylated. Mono-methylation is predominant; automethylation is lower and slower than H3 peptide methylation and is in a highest S-adenosyl-L-methionine concentration-dependent. There are two major sites for automethylation at Lys-372 and Lys-378. Lysines can be simultaneously methylated, such as Lys-372(me3)/Lys-376(me1), Lys-372(me1)/Lys-378(me1) and Lys-372(me1)/Lys-376(me1)/Lys-378(me1). Automethylation is an intramolecular (cis) process.

The protein resides in the nucleus. It localises to the chromosome. The enzyme catalyses L-lysyl-[protein] + S-adenosyl-L-methionine = N(6)-methyl-L-lysyl-[protein] + S-adenosyl-L-homocysteine + H(+). The catalysed reaction is N(6)-methyl-L-lysyl-[protein] + S-adenosyl-L-methionine = N(6),N(6)-dimethyl-L-lysyl-[protein] + S-adenosyl-L-homocysteine + H(+). It carries out the reaction L-lysyl(4)-[histone H3] + 3 S-adenosyl-L-methionine = N(6),N(6),N(6)-trimethyl-L-lysyl(4)-[histone H3] + 3 S-adenosyl-L-homocysteine + 3 H(+). It catalyses the reaction L-lysyl(36)-[histone H3] + 3 S-adenosyl-L-methionine = N(6),N(6),N(6)-trimethyl-L-lysyl(36)-[histone H3] + 3 S-adenosyl-L-homocysteine + 3 H(+). The enzyme catalyses L-lysyl(9)-[histone H3] + 3 S-adenosyl-L-methionine = N(6),N(6),N(6)-trimethyl-L-lysyl(9)-[histone H3] + 3 S-adenosyl-L-homocysteine + 3 H(+). The catalysed reaction is L-lysyl(20)-[histone H4] + S-adenosyl-L-methionine = N(6)-methyl-L-lysyl(20)-[histone H4] + S-adenosyl-L-homocysteine + H(+). It carries out the reaction N(6)-methyl-L-lysyl(20)-[histone H4] + S-adenosyl-L-methionine = N(6),N(6)-dimethyl-L-lysyl(20)-[histone H4] + S-adenosyl-L-homocysteine + H(+). Functionally, histone methyltransferase that sequentially mono-, di-, and tri-methylates both 'Lys-4' (H3K4) and 'Lys-36' (H3K36) of histone H3 to produce respectively trimethylated 'Lys-4' (H3K4me3) and trimethylated 'Lys-36' (H3K36me3) histone H3 and plays a key role in meiotic prophase by determining hotspot localization thereby promoting meiotic recombination. Can also methylate all four core histones with H3 being the best substrate and the most highly modified. Is also able, on one hand, to mono and di-methylate H4K20 and on other hand to trimethylate H3K9 with the di-methylated H3K9 as the best substrate. During meiotic prophase, binds specific DNA sequences through its zinc finger domains thereby determining hotspot localization where it promotes local H3K4me3 and H3K36me3 enrichment on the same nucleosomes through its histone methyltransferase activity. Thereby promotes double-stranded breaks (DSB) formation, at this subset of PRDM9-binding sites, that initiates meiotic recombination for the proper meiotic progression. During meiotic progression hotspot-bound PRDM9 interacts with several complexes; in early leptonema binds CDYL and EHMT2 followed by EWSR1 and CXXC1 by the end of leptonema. EWSR1 joins PRDM9 with the chromosomal axis through REC8. In this way, controls the DSB repair pathway, pairing of homologous chromosomes and sex body formation. Moreover plays a central role in the transcriptional activation of genes during early meiotic prophase thanks to H3K4me3 and H3K36me3 enrichment that represents a specific tag for epigenetic transcriptional activation. In addition performs automethylation. Acetylation and phosphorylation of histone H3 attenuate or prevent histone H3 methylation. This chain is Histone-lysine N-methyltransferase PRDM9, found in Rattus norvegicus (Rat).